Here is a 416-residue protein sequence, read N- to C-terminus: Probable glucan 1,3-beta-glucosidase A (416 aa).

A signal peptide spans 1 to 22 (MIFKFSQKALVALCLVVGLAEA). Catalysis depends on E211, which acts as the Proton donor. 2 disulfide bridges follow: C291-C415 and C316-C342. Catalysis depends on E308, which acts as the Nucleophile.

Belongs to the glycosyl hydrolase 5 (cellulase A) family. As to quaternary structure, monomer. The cofactor is Mn(2+).

It is found in the secreted. It catalyses the reaction Successive hydrolysis of beta-D-glucose units from the non-reducing ends of (1-&gt;3)-beta-D-glucans, releasing alpha-glucose.. In terms of biological role, beta-glucanases participate in the metabolism of beta-glucan, the main structural component of the cell wall. It could also function biosynthetically as a transglycosylase. The chain is Probable glucan 1,3-beta-glucosidase A (exgA) from Neosartorya fischeri (strain ATCC 1020 / DSM 3700 / CBS 544.65 / FGSC A1164 / JCM 1740 / NRRL 181 / WB 181) (Aspergillus fischerianus).